We begin with the raw amino-acid sequence, 267 residues long: tRNA pseudouridine synthase A (267 aa).

Asp53 (nucleophile) is an active-site residue. Tyr114 is a binding site for substrate.

Belongs to the tRNA pseudouridine synthase TruA family. Homodimer.

The catalysed reaction is uridine(38/39/40) in tRNA = pseudouridine(38/39/40) in tRNA. Its function is as follows. Formation of pseudouridine at positions 38, 39 and 40 in the anticodon stem and loop of transfer RNAs. In Chlamydia muridarum (strain MoPn / Nigg), this protein is tRNA pseudouridine synthase A.